The following is a 273-amino-acid chain: Tyrosinase (273 aa).

The signal sequence occupies residues M1 to G18. N-linked (GlcNAc...) asparagine glycans are attached at residues N86 and N169. Cu cation is bound by residues H180, H202, and H211. N-linked (GlcNAc...) asparagine glycosylation occurs at N230.

This sequence belongs to the tyrosinase family. The cofactor is Cu(2+).

The protein localises to the melanosome membrane. The catalysed reaction is 2 L-dopa + O2 = 2 L-dopaquinone + 2 H2O. The enzyme catalyses L-tyrosine + O2 = L-dopaquinone + H2O. Its function is as follows. This is a copper-containing oxidase that functions in the formation of pigments such as melanins and other polyphenolic compounds. The protein is Tyrosinase (TYR) of Pelodiscus sinensis (Chinese softshell turtle).